Reading from the N-terminus, the 130-residue chain is Large ribosomal subunit protein bL21 (130 aa).

The segment at 103-130 is disordered; it reads AGGKTSKAEPRKTRKAEPAAESAPAAAE. Residues 108–120 show a composition bias toward basic and acidic residues; the sequence is SKAEPRKTRKAEP. The span at 121-130 shows a compositional bias: low complexity; that stretch reads AAESAPAAAE.

It belongs to the bacterial ribosomal protein bL21 family. Part of the 50S ribosomal subunit. Contacts protein L20.

This protein binds to 23S rRNA in the presence of protein L20. The sequence is that of Large ribosomal subunit protein bL21 from Methylorubrum extorquens (strain CM4 / NCIMB 13688) (Methylobacterium extorquens).